A 210-amino-acid chain; its full sequence is Probable membrane protein MT1774 (210 aa).

2 consecutive transmembrane segments (helical) span residues 43-63 (AVVMLLAVTVSLLTIPFAAAA) and 165-185 (ALAALGLWLSVAAVAGALLAL).

The protein localises to the cell membrane. The sequence is that of Probable membrane protein MT1774 from Mycobacterium tuberculosis (strain CDC 1551 / Oshkosh).